The following is a 461-amino-acid chain: MLKIFNTLTRQKEEFKPIHAGEVGMYVCGITVYDLCHIGHGRTFVAFDVVARYLRFLGYKLKYVRNITDIDDKIIKRANENGESFVALVDRMIAEMHKDFDALNILRPDMEPRATHHIAEIIELTEQLIAKGHAYVADNGDVMFDVPTDPTYGVLSRQDLDQLQAGARVDVVDDKRNRMDFVLWKMSKEGEPSWPSPWGAGRPGWHIECSAMNCKQLGNHFDIHGGGSDLMFPHHENEIAQSTCAHDGQYVNYWMHSGMVMVDREKMSKSLGNFFTVRDVLKYYDAETVRYFLMSGHYRSQLNYSEENLKQARAALERLYTALRGTDKTVAPAGGEAFEARFIEAMDDDFNTPEAYSVLFDMAREVNRLKAEDMAAANAMASHLRKLSAVLGLLEQEPEAFLQSGAQADDSEVAEIEALIQQRLDARKAKDWAAADAARDRLNEMGIVLEDGPQGTTWRRK.

C28 lines the Zn(2+) pocket. Residues 30-40 (ITVYDLCHIGH) carry the 'HIGH' region motif. Zn(2+) is bound by residues C209, H234, and E238. The 'KMSKS' region signature appears at 266 to 270 (KMSKS). Residue K269 coordinates ATP.

It belongs to the class-I aminoacyl-tRNA synthetase family. Monomer. Requires Zn(2+) as cofactor.

It localises to the cytoplasm. The catalysed reaction is tRNA(Cys) + L-cysteine + ATP = L-cysteinyl-tRNA(Cys) + AMP + diphosphate. This is Cysteine--tRNA ligase from Shigella flexneri.